Consider the following 200-residue polypeptide: Protein GrpE (200 aa).

This sequence belongs to the GrpE family. Homodimer.

It is found in the cytoplasm. Participates actively in the response to hyperosmotic and heat shock by preventing the aggregation of stress-denatured proteins, in association with DnaK and GrpE. It is the nucleotide exchange factor for DnaK and may function as a thermosensor. Unfolded proteins bind initially to DnaJ; upon interaction with the DnaJ-bound protein, DnaK hydrolyzes its bound ATP, resulting in the formation of a stable complex. GrpE releases ADP from DnaK; ATP binding to DnaK triggers the release of the substrate protein, thus completing the reaction cycle. Several rounds of ATP-dependent interactions between DnaJ, DnaK and GrpE are required for fully efficient folding. This chain is Protein GrpE, found in Mycoplasma mycoides subsp. mycoides SC (strain CCUG 32753 / NCTC 10114 / PG1).